A 146-amino-acid polypeptide reads, in one-letter code: uncharacterized protein (146 aa).

4 helical membrane-spanning segments follow: residues 1–21, 35–55, 87–107, and 111–131; these read MFANAGLSPFVAIWTARAASL, AAVYVGSAVVPAAVAGPLFVG, GGAGGWVGVHCPVVGGGGVGH, and AIAAAVSVHSTCMPAAFGGHL.

It is found in the cell membrane. This is an uncharacterized protein from Mycobacterium tuberculosis (strain CDC 1551 / Oshkosh).